The sequence spans 1123 residues: Polyprotein of EF-Ts, chloroplastic (1123 aa).

Residues 1–73 (MTPVVHCSVG…SSARRPRTLS (73 aa)) constitute a chloroplast transit peptide. The segment at 68–141 (RPRTLSAATV…MPPLNDEDLV (74 aa)) is disordered. Over residues 94-103 (TSEESSEDTA) the composition is skewed to acidic residues. A compositionally biased stretch (low complexity) spans 106 to 119 (TAEASEQAEASTSS). The region spanning 143 to 212 (GASFTGKVRS…ETGRISLTMR (70 aa)) is the S1 motif 1 domain. Residues 213–258 (TGGDYVKPKTETPKAASGGRNTTATTSRGSPRQTRERDEAKSMGET) are disordered. Polar residues predominate over residues 231 to 244 (GRNTTATTSRGSPR). The segment covering 245-254 (QTRERDEAKS) has biased composition (basic and acidic residues). The S1 motif 2 domain maps to 263–331 (GQFLDGVVKN…VRGQVTLTMK (69 aa)). Disordered regions lie at residues 443–670 (KTES…SEKT) and 894–923 (VAAQ…EEKK). Residues 486–501 (EGSVTTEPTEAASTEF) show a composition bias toward polar residues. Low complexity predominate over residues 551-587 (SVASTESVTAVVEESAPVSSVAIEVPAPEASEASAQE). A compositionally biased stretch (acidic residues) spans 630 to 639 (KPDEPEESLI). 2 stretches are compositionally biased toward low complexity: residues 657–670 (AAVP…SEKT) and 894–903 (VAAQTAAKAP). Residues 908–923 (PKDDKPEETAETEEKK) show a composition bias toward basic and acidic residues.

The protein belongs to the EF-Ts family. In terms of assembly, component of the chloroplast ribosome 30S and 70S subunits, as well as polysomes. As to quaternary structure, component of the chloroplast ribosome 70S subunit, and at low levels, present in polysomes. Associates transiently with chloroplast polysomes.

Its subcellular location is the plastid. It localises to the chloroplast. Associates with the EF-Tu.GDP complex and induces the exchange of GDP to GTP. It remains bound to the aminoacyl-tRNA.EF-Tu.GTP complex up to the GTP hydrolysis stage on the ribosome. In terms of biological role, binds to psbD and psbA 5'-untranslated regions (UTRs) in vitro. The chain is Polyprotein of EF-Ts, chloroplastic from Oryza sativa subsp. indica (Rice).